Here is a 255-residue protein sequence, read N- to C-terminus: Pimeloyl-[acyl-carrier protein] methyl ester esterase (255 aa).

Residues Trp18, Ser78–Leu79, and Phe139–Asp143 each bind substrate. Ser78 functions as the Nucleophile in the catalytic mechanism. Catalysis depends on residues Asp203 and His233. His233 contacts substrate.

Belongs to the AB hydrolase superfamily. Carboxylesterase BioH family. As to quaternary structure, monomer.

The protein localises to the cytoplasm. The enzyme catalyses 6-carboxyhexanoyl-[ACP] methyl ester + H2O = 6-carboxyhexanoyl-[ACP] + methanol + H(+). It functions in the pathway cofactor biosynthesis; biotin biosynthesis. Its function is as follows. The physiological role of BioH is to remove the methyl group introduced by BioC when the pimeloyl moiety is complete. It allows to synthesize pimeloyl-ACP via the fatty acid synthetic pathway through the hydrolysis of the ester bonds of pimeloyl-ACP esters. In Xylella fastidiosa (strain 9a5c), this protein is Pimeloyl-[acyl-carrier protein] methyl ester esterase.